We begin with the raw amino-acid sequence, 53 residues long: Mitochondrial sheath formation-associated protein (53 aa).

Mitochondrial intermembrane segments lie at residues 1-6 and 1-7; these read MIVLGW and MIVLGWM. 2 helical membrane-spanning segments follow: residues 7–23 and 8–24; these read MLFV…PEAM and LFVG…EAMP. Cytoplasmic segments lie at residues 24–53 and 25–40; these read PPTL…ELLL and PTLK…ENKA.

As to quaternary structure, interacts with VDAC3. In terms of tissue distribution, testis specific. Detected only in germ cells at the step of spermiogenesis (at protein level). Expressed during the middle steps of spermatid development. Testis specific. Detected only in germ cells at the step of spermiogenesis (at protein level). Expressed in the late steps of spermatid development.

The protein localises to the mitochondrion outer membrane. Its function is as follows. Regulates sperm development. May be involved in mitochondrial sheath formation. This chain is Mitochondrial sheath formation-associated protein, found in Mus musculus (Mouse).